The following is a 93-amino-acid chain: Late embryogenesis abundant protein B19.1A (93 aa).

The interval 1 to 93 (MASGQQERSQ…IDESKFKTKS (93 aa)) is disordered. Composition is skewed to basic and acidic residues over residues 9–19 (SQLDRKAREGE) and 73–93 (GGER…KTKS).

This sequence belongs to the small hydrophilic plant seed protein family. Embryos and young seedlings.

Lea proteins are late embryonic proteins abundant in higher plant seed embryos. It may have a role in desiccation tolerance by acting as an osmoprotective protein or as a desiccation-damage repair protein. This Hordeum vulgare (Barley) protein is Late embryogenesis abundant protein B19.1A (B19.1A).